Consider the following 588-residue polypeptide: Aspartate--tRNA ligase (588 aa).

Glutamate 174 lines the L-aspartate pocket. An aspartate region spans residues 198–201 (QLFK). Arginine 220 lines the L-aspartate pocket. ATP is bound by residues 220 to 222 (RDE) and glutamine 229. Histidine 448 contacts L-aspartate. Glutamate 482 serves as a coordination point for ATP. An L-aspartate-binding site is contributed by arginine 489. An ATP-binding site is contributed by 534–537 (GLDR).

Belongs to the class-II aminoacyl-tRNA synthetase family. Type 1 subfamily. Homodimer.

It is found in the cytoplasm. The enzyme catalyses tRNA(Asp) + L-aspartate + ATP = L-aspartyl-tRNA(Asp) + AMP + diphosphate. Functionally, catalyzes the attachment of L-aspartate to tRNA(Asp) in a two-step reaction: L-aspartate is first activated by ATP to form Asp-AMP and then transferred to the acceptor end of tRNA(Asp). This is Aspartate--tRNA ligase from Exiguobacterium sibiricum (strain DSM 17290 / CCUG 55495 / CIP 109462 / JCM 13490 / 255-15).